A 248-amino-acid chain; its full sequence is PF03932 family protein CutC (248 aa).

The protein belongs to the CutC family. Homodimer.

The protein resides in the cytoplasm. This chain is PF03932 family protein CutC, found in Escherichia coli O7:K1 (strain IAI39 / ExPEC).